The chain runs to 635 residues: Threonine--tRNA ligase (635 aa).

Residues 1-144 form an editing domain region; sequence MQLLLIHSDY…RSIRPEGTQR (144 aa). The segment at 215 to 514 is catalytic; sequence PHVELMRRLE…TEEGKVPMLP (300 aa). Positions 307, 359, and 483 each coordinate Zn(2+).

The protein belongs to the class-II aminoacyl-tRNA synthetase family. As to quaternary structure, homodimer. The cofactor is Zn(2+).

It is found in the cytoplasm. The catalysed reaction is tRNA(Thr) + L-threonine + ATP = L-threonyl-tRNA(Thr) + AMP + diphosphate + H(+). Functionally, catalyzes the attachment of threonine to tRNA(Thr) in a two-step reaction: L-threonine is first activated by ATP to form Thr-AMP and then transferred to the acceptor end of tRNA(Thr). Also edits incorrectly charged L-seryl-tRNA(Thr). The chain is Threonine--tRNA ligase from Methanosarcina barkeri (strain Fusaro / DSM 804).